The chain runs to 295 residues: MSVITQAQEIPTVAANPDFNYEGDPIIIQLCDRDTVFELSRDQLLGLPESILMCLFPRGLLLDYEIQECQLTQRPLIFQTADFDPSLLQYILNYFQMAENRTANDEIALSPPPPSFPGKCGIILLKEDIEFFILPPISPTTNIAIEVSPNDLLKLKQRVAQRLLQQKKIFDCLHLENSTSEGSAEKNLVRMLCYSGFHEDDEWKRRIQEPHRACITSVTLTNLDFSADQGPVSDPEYFPVYHKLLLFWQKPARKCWWDSSTSITYNGIEFATWVRRVWTLELAVLGANTYETAAV.

The protein belongs to the WHI2 family.

The protein resides in the cytoplasm. Its subcellular location is the nucleus. This chain is WHI2-like protein P4H10.16c, found in Schizosaccharomyces pombe (strain 972 / ATCC 24843) (Fission yeast).